The following is a 692-amino-acid chain: FMR1-interacting protein NUFIP2 (692 aa).

The segment at 1-100 (MEEKPGQPQP…KKTGYGEING (100 aa)) is disordered. Composition is skewed to basic residues over residues 11–23 (QHHH…HHHP) and 31–54 (SHHH…HHQQ). Residue K79 forms a Glycyl lysine isopeptide (Lys-Gly) (interchain with G-Cter in SUMO2) linkage. Position 88 is a phosphothreonine (T88). Residue K110 forms a Glycyl lysine isopeptide (Lys-Gly) (interchain with G-Cter in SUMO2) linkage. S113 and S114 each carry phosphoserine. Residues K137, K147, K158, and K172 each participate in a glycyl lysine isopeptide (Lys-Gly) (interchain with G-Cter in SUMO2) cross-link. The tract at residues 205–233 (SKGADNDGSGSESGYTTPKKRKARRNSAK) is disordered. 2 positions are modified to phosphoserine: S213 and S215. At Y219 the chain carries Phosphotyrosine. Phosphothreonine occurs at positions 220 and 221. The segment covering 222–231 (PKKRKARRNS) has biased composition (basic residues). Residues K262 and K281 each participate in a glycyl lysine isopeptide (Lys-Gly) (interchain with G-Cter in SUMO2) cross-link. Disordered stretches follow at residues 277–337 (KPIW…WTLF) and 369–401 (TVQN…SQVP). Omega-N-methylarginine is present on R291. K293 participates in a covalent cross-link: Glycyl lysine isopeptide (Lys-Gly) (interchain with G-Cter in SUMO2). S304 carries the post-translational modification Phosphoserine. K307 participates in a covalent cross-link: Glycyl lysine isopeptide (Lys-Gly) (interchain with G-Cter in SUMO2). The segment covering 371-395 (QNSSVSPSSSSSSSSTGETQTQSSS) has biased composition (low complexity). At S376 the chain carries Phosphoserine. T569 bears the Phosphothreonine mark. 4 positions are modified to phosphoserine: S570, S589, S605, and S626. Position 630 is a phosphothreonine (T630). Residues S634, S649, S652, and S689 each carry the phosphoserine modification.

Interacts with FMR1 (via N-terminus). Interacts with DDX6.

Its subcellular location is the nucleus. The protein resides in the cytoplasm. The protein localises to the stress granule. Its function is as follows. Binds RNA. The sequence is that of FMR1-interacting protein NUFIP2 (Nufip2) from Mus musculus (Mouse).